Reading from the N-terminus, the 197-residue chain is Ribosome maturation factor RimP (197 aa).

This sequence belongs to the RimP family.

It localises to the cytoplasm. Required for maturation of 30S ribosomal subunits. The protein is Ribosome maturation factor RimP of Acidovorax sp. (strain JS42).